The chain runs to 517 residues: T-box transcription factor TBX22 (517 aa).

The disordered stretch occupies residues 1–83 (MALSSRAHAF…SDESNSQESL (83 aa)). The segment covering 35–45 (LQEEQFVEEGE) has biased composition (acidic residues). Positions 46 to 66 (EILRSPSRDSQQPEKRLKAES) are enriched in basic and acidic residues. Residues 74 to 83 (SDESNSQESL) are compositionally biased toward low complexity. Residues 93–280 (LQGSDLWKRF…RNPFAKGFRD (188 aa)) constitute a DNA-binding region (T-box). The interval 312-333 (TQSGSSGSSPVTSSGGAPSPLN) is disordered. Low complexity predominate over residues 314-333 (SGSSGSSPVTSSGGAPSPLN).

Its subcellular location is the nucleus. In terms of biological role, probable transcriptional regulator involved in developmental processes. This is major determinant crucial to palatogenesis. This chain is T-box transcription factor TBX22 (Tbx22), found in Mus musculus (Mouse).